The chain runs to 983 residues: Kinesin-like protein KIN-14I (983 aa).

The region spanning 44 to 166 (ASRRYEAANW…CVLAIKSYDE (123 aa)) is the Calponin-homology (CH) domain. 2 stretches are compositionally biased toward polar residues: residues 203 to 214 (SLSRTSSINNEK) and 278 to 287 (ESTSSQNNRS). Disordered regions lie at residues 203-227 (SLSRTSSINNEKAPSENDSNKLSSP) and 276-295 (PRESTSSQNNRSFLKPLGER). The Kinesin motor domain maps to 399 to 724 (SIRVYCRVRP…LKFAERVATV (326 aa)). 481–488 (GQTGSGKT) is an ATP binding site. Residues 731–758 (VNNDTSDVKELKEQIATLKAALARKEAE) adopt a coiled-coil conformation. 2 disordered regions span residues 802–824 (TVNSPPWPPVASPGQAYREDDRS) and 921–983 (TRSN…NARH). Polar residues predominate over residues 939–951 (SPQSRNNSNNTVS).

The protein belongs to the TRAFAC class myosin-kinesin ATPase superfamily. Kinesin family. KIN-14 subfamily.

This Arabidopsis thaliana (Mouse-ear cress) protein is Kinesin-like protein KIN-14I.